The primary structure comprises 155 residues: DNA polymerase epsilon subunit 4 (155 aa).

Composition is skewed to acidic residues over residues 1 to 16 and 24 to 48; these read MASE…EEQD and ETEE…DNPE. Residues 1-76 form a disordered region; that stretch reads MASEELFEAE…APADNEAKMT (76 aa). Residues 49–65 show a composition bias toward polar residues; it reads AESTTEQLTEKPVTNGN.

As to quaternary structure, component of the DNA polymerase epsilon complex consisting of four subunits: the catalytic subunit PolE1/DNApol-epsilon255 and the accessory subunits PolE2/DNApol-epsilon58, Chrac-14/DNApolE3 and PolE4/Mes4.

It is found in the nucleus. Accessory component of the DNA polymerase epsilon complex. Participates in DNA repair and in chromosomal DNA replication. Has a role in cell cycle progression. Required for wing morphogenesis. This chain is DNA polymerase epsilon subunit 4, found in Drosophila melanogaster (Fruit fly).